Reading from the N-terminus, the 173-residue chain is Shikimate kinase (173 aa).

12 to 17 (GSGKTT) contributes to the ATP binding site. A Mg(2+)-binding site is contributed by Thr16. Residues Asp34, Arg58, and Gly80 each contribute to the substrate site. Residue Arg118 participates in ATP binding. Residue Arg136 participates in substrate binding.

Belongs to the shikimate kinase family. Monomer. The cofactor is Mg(2+).

It localises to the cytoplasm. The catalysed reaction is shikimate + ATP = 3-phosphoshikimate + ADP + H(+). Its pathway is metabolic intermediate biosynthesis; chorismate biosynthesis; chorismate from D-erythrose 4-phosphate and phosphoenolpyruvate: step 5/7. Functionally, catalyzes the specific phosphorylation of the 3-hydroxyl group of shikimic acid using ATP as a cosubstrate. This chain is Shikimate kinase, found in Moorella thermoacetica (strain ATCC 39073 / JCM 9320).